Reading from the N-terminus, the 66-residue chain is Small ribosomal subunit protein bS21 (66 aa).

The disordered stretch occupies residues 47 to 66 (KAQEAARRKRKFARKRMYED). The segment covering 53 to 66 (RRKRKFARKRMYED) has biased composition (basic residues).

It belongs to the bacterial ribosomal protein bS21 family.

This Rickettsia bellii (strain RML369-C) protein is Small ribosomal subunit protein bS21.